A 205-amino-acid polypeptide reads, in one-letter code: Holliday junction branch migration complex subunit RuvA (205 aa).

Residues 1 to 64 are domain I; that stretch reads MIGRLRGIIL…EDAQLLFGFN (64 aa). Positions 65 to 143 are domain II; it reads DKQERALFRE…GLSGDLFNSV (79 aa). Residues 144-156 form a flexible linker region; sequence SDIPLTSPANVDN. Positions 157–205 are domain III; the sequence is RVGEPEAEAAAALVALGYKPQEASRMISKIARPDADCETLIRDALRAAL.

The protein belongs to the RuvA family. As to quaternary structure, homotetramer. Forms an RuvA(8)-RuvB(12)-Holliday junction (HJ) complex. HJ DNA is sandwiched between 2 RuvA tetramers; dsDNA enters through RuvA and exits via RuvB. An RuvB hexamer assembles on each DNA strand where it exits the tetramer. Each RuvB hexamer is contacted by two RuvA subunits (via domain III) on 2 adjacent RuvB subunits; this complex drives branch migration. In the full resolvosome a probable DNA-RuvA(4)-RuvB(12)-RuvC(2) complex forms which resolves the HJ.

Its subcellular location is the cytoplasm. Its function is as follows. The RuvA-RuvB-RuvC complex processes Holliday junction (HJ) DNA during genetic recombination and DNA repair, while the RuvA-RuvB complex plays an important role in the rescue of blocked DNA replication forks via replication fork reversal (RFR). RuvA specifically binds to HJ cruciform DNA, conferring on it an open structure. The RuvB hexamer acts as an ATP-dependent pump, pulling dsDNA into and through the RuvAB complex. HJ branch migration allows RuvC to scan DNA until it finds its consensus sequence, where it cleaves and resolves the cruciform DNA. In Pectobacterium atrosepticum (strain SCRI 1043 / ATCC BAA-672) (Erwinia carotovora subsp. atroseptica), this protein is Holliday junction branch migration complex subunit RuvA.